Consider the following 1065-residue polypeptide: Probable importin-7 homolog (1065 aa).

The region spanning 25–98 is the Importin N-terminal domain; sequence AEAQLQQIKV…KENLIDLLVH (74 aa). The tract at residues 958–996 is disordered; it reads ENGGDLGEDEGDNFDDQNDDDDQDSEEDLFEDEDTPDFE. Residues 963-996 are compositionally biased toward acidic residues; sequence LGEDEGDNFDDQNDDDDQDSEEDLFEDEDTPDFE.

Belongs to the importin beta family.

The protein localises to the cytoplasm. The protein resides in the nucleus. In terms of biological role, may function in nuclear protein import. The polypeptide is Probable importin-7 homolog (Dictyostelium discoideum (Social amoeba)).